A 271-amino-acid chain; its full sequence is Ubiquitin thioesterase OTUB1 (271 aa).

Alanine 2 is subject to N-acetylalanine. A Phosphoserine modification is found at serine 16. Tyrosine 26 is subject to Phosphotyrosine; by SRC. An OTU domain is found at 80-271 (SYIRKTRPDG…RPGHYDILYK (192 aa)). Aspartate 88 is an active-site residue. The Nucleophile role is filled by cysteine 91. Ubiquitin-conjugating enzyme E2 binding regions lie at residues 130-138 (FTEFTIEDF) and 169-177 (DYLVVYLRL). A free ubiquitin binding region spans residues 189–195 (FFEHFIE). The ubiquitin-conjugating enzyme E2 binding stretch occupies residues 206–213 (QEVEPMCK). 2 free ubiquitin binding regions span residues 214-221 (ESDHIHII) and 245-251 (NPHIFPE). The active site involves histidine 265.

It belongs to the peptidase C65 family. In terms of assembly, interacts with FUS and RACK1. Interacts with UBE2D1/UBCH5A, UBE2W/UBC16 and UBE2N/UBC13. Interacts with RNF128. Forms a ternary complex with RNF128 and USP8. Interacts with the C-terminal UCH catalytic domain of USP8. As to quaternary structure, interacts with RNF128. Does not associate with USP8. Phosphorylation at Tyr-26 by SRC and SRMS promotes deubiquitination of RPTOR via a non-catalytic process. Isoform 1 is ubiquitous. Isoform 2 is expressed only in lymphoid tissues such as tonsils, lymph nodes and spleen, as well as peripheral blood mononuclear cells.

It is found in the cytoplasm. It catalyses the reaction Thiol-dependent hydrolysis of ester, thioester, amide, peptide and isopeptide bonds formed by the C-terminal Gly of ubiquitin (a 76-residue protein attached to proteins as an intracellular targeting signal).. With respect to regulation, by free ubiquitin: binding of free ubiquitin triggers conformational changes in the OTU domain and formation of a ubiquitin-binding helix in the N-terminus, promoting binding of the conjugated donor ubiquitin in UBE2N/UBC13 to OTUB1. Its function is as follows. Hydrolase that can specifically remove 'Lys-48'-linked conjugated ubiquitin from proteins and plays an important regulatory role at the level of protein turnover by preventing degradation. Regulator of T-cell anergy, a phenomenon that occurs when T-cells are rendered unresponsive to antigen rechallenge and no longer respond to their cognate antigen. Acts via its interaction with RNF128/GRAIL, a crucial inductor of CD4 T-cell anergy. Isoform 1 destabilizes RNF128, leading to prevent anergy. In contrast, isoform 2 stabilizes RNF128 and promotes anergy. Surprisingly, it regulates RNF128-mediated ubiquitination, but does not deubiquitinate polyubiquitinated RNF128. Deubiquitinates estrogen receptor alpha (ESR1). Mediates deubiquitination of 'Lys-48'-linked polyubiquitin chains, but not 'Lys-63'-linked polyubiquitin chains. Not able to cleave di-ubiquitin. Also capable of removing NEDD8 from NEDD8 conjugates, but with a much lower preference compared to 'Lys-48'-linked ubiquitin. Functionally, plays a key non-catalytic role in DNA repair regulation by inhibiting activity of RNF168, an E3 ubiquitin-protein ligase that promotes accumulation of 'Lys-63'-linked histone H2A and H2AX at DNA damage sites. Inhibits RNF168 independently of ubiquitin thioesterase activity by binding and inhibiting UBE2N/UBC13, the E2 partner of RNF168, thereby limiting spreading of 'Lys-63'-linked histone H2A and H2AX marks. Inhibition occurs by binding to free ubiquitin: free ubiquitin acts as an allosteric regulator that increases affinity for UBE2N/UBC13 and disrupts interaction with UBE2V1. The OTUB1-UBE2N/UBC13-free ubiquitin complex adopts a configuration that mimics a cleaved 'Lys48'-linked di-ubiquitin chain. Acts as a regulator of mTORC1 and mTORC2 complexes. When phosphorylated at Tyr-26, acts as an activator of the mTORC1 complex by mediating deubiquitination of RPTOR via a non-catalytic process: acts by binding and inhibiting the activity of the ubiquitin-conjugating enzyme E2 (UBE2D1/UBCH5A, UBE2W/UBC16 and UBE2N/UBC13), thereby preventing ubiquitination of RPTOR. Can also act as an inhibitor of the mTORC1 and mTORC2 complexes in response to amino acids by mediating non-catalytic deubiquitination of DEPTOR. The protein is Ubiquitin thioesterase OTUB1 (OTUB1) of Homo sapiens (Human).